We begin with the raw amino-acid sequence, 1344 residues long: Myb-binding protein 1A (1344 aa).

The segment at Met-1–Arg-24 is disordered. N-acetylalanine is present on Ala-2. The interaction with MYB stretch occupies residues Ala-2–Glu-580. A Phosphoserine modification is found at Ser-14. N6-acetyllysine is present on residues Lys-69 and Lys-156. 2 short sequence motifs (nuclear export signal) span residues Ser-238–Val-256 and Lys-261–Phe-279. 2 disordered regions span residues Asn-696 to Pro-752 and Pro-1150 to Pro-1344. Residues Thr-708 to Glu-730 show a composition bias toward basic and acidic residues. The span at Ser-731–Arg-746 shows a compositional bias: acidic residues. Residues Pro-1150–Pro-1161 show a composition bias toward basic and acidic residues. Residue Lys-1151 forms a Glycyl lysine isopeptide (Lys-Gly) (interchain with G-Cter in SUMO2) linkage. Residues Lys-1154–Pro-1344 form a required for nuclear and nucleolar localization region. Phosphoserine is present on residues Ser-1162 and Ser-1166. Over residues Thr-1170–Leu-1187 the composition is skewed to basic residues. Ser-1189 bears the Phosphoserine mark. Residue Thr-1193 is modified to Phosphothreonine. Phosphoserine is present on residues Ser-1221 and Ser-1246. Residues Pro-1247–Pro-1256 show a composition bias toward low complexity. Thr-1253 carries the post-translational modification Phosphothreonine. Ser-1255 is modified (phosphoserine). Residues Thr-1258 and Thr-1280 each carry the phosphothreonine modification. 3 positions are modified to phosphoserine: Ser-1283, Ser-1305, and Ser-1318. The segment covering Val-1301–Arg-1316 has biased composition (basic residues). Low complexity predominate over residues Leu-1317–Ser-1329. The residue at position 1322 (Arg-1322) is a Citrulline. 3 positions are modified to phosphoserine: Ser-1323, Ser-1325, and Ser-1329. Positions Ile-1331 to Pro-1344 are enriched in basic residues.

This sequence belongs to the MYBBP1A family. Binds to and represses JUN and MYB via the leucine zipper regions present in these proteins. Also binds to and represses PPARGC1A: this interaction is abrogated when PPARGC1A is phosphorylated by MAPK1/ERK. Binds to and stimulates transcription by AHR. Binds to KPNA2. Component of the B-WICH complex, at least composed of SMARCA5/SNF2H, BAZ1B/WSTF, SF3B1, DEK, MYO1C, ERCC6, MYBBP1A and DDX21. Interacts with CLOCK and CRY1. Post-translationally, citrullinated by PADI4.

Its subcellular location is the nucleus. It localises to the nucleolus. The protein localises to the cytoplasm. Its function is as follows. May activate or repress transcription via interactions with sequence specific DNA-binding proteins. Repression may be mediated at least in part by histone deacetylase activity (HDAC activity). Acts as a corepressor and in concert with CRY1, represses the transcription of the core circadian clock component PER2. Preferentially binds to dimethylated histone H3 'Lys-9' (H3K9me2) on the PER2 promoter. Has a role in rRNA biogenesis together with PWP1. This is Myb-binding protein 1A (Mybbp1a) from Rattus norvegicus (Rat).